The sequence spans 153 residues: Large ribosomal subunit protein uL15 (153 aa).

Positions 21 to 41 (RGIGSGKGKTGGRGIKGQKSR) are disordered. Positions 23–35 (IGSGKGKTGGRGI) are enriched in gly residues.

It belongs to the universal ribosomal protein uL15 family. In terms of assembly, part of the 50S ribosomal subunit.

Binds to the 23S rRNA. The polypeptide is Large ribosomal subunit protein uL15 (Rickettsia rickettsii (strain Iowa)).